We begin with the raw amino-acid sequence, 188 residues long: CASP-like protein 4B1 (188 aa).

Residues 1-11 are compositionally biased toward basic and acidic residues; the sequence is MTNPDKQKPVE. Residues 1-34 are disordered; the sequence is MTNPDKQKPVEVTDVETAAEKTSEPTPASGTSTI. At 1–46 the chain is on the cytoplasmic side; it reads MTNPDKQKPVEVTDVETAAEKTSEPTPASGTSTITQRWKREDLIKK. The span at 24–34 shows a compositional bias: polar residues; sequence EPTPASGTSTI. Residues 47-67 traverse the membrane as a helical segment; that stretch reads ASPITRGICLLFSLLAFLIMV. Over 68 to 84 the chain is Extracellular; that stretch reads SNKHGYGRNFNEYEEYR. A helical membrane pass occupies residues 85 to 105; that stretch reads YVLAISIISTLYTAWQTFAHF. The Cytoplasmic portion of the chain corresponds to 106 to 120; that stretch reads SKREFFDRRTSTLVD. Residues 121-141 form a helical membrane-spanning segment; it reads FSGDQIVAYLLISAASSAIPL. At 142–156 the chain is on the extracellular side; the sequence is TNRFREGQDNIFTDS. Residues 157–177 traverse the membrane as a helical segment; sequence AASAISMAIFAFVALALSALF. Residues 178–188 lie on the Cytoplasmic side of the membrane; it reads SGYKLSTHSFI.

The protein belongs to the Casparian strip membrane proteins (CASP) family. Homodimer and heterodimers.

Its subcellular location is the cell membrane. The chain is CASP-like protein 4B1 from Arabidopsis lyrata subsp. lyrata (Lyre-leaved rock-cress).